Here is a 191-residue protein sequence, read N- to C-terminus: Dephospho-CoA kinase (191 aa).

In terms of domain architecture, DPCK spans 3-191 (AIGITGSYAS…KLILVIARKL (189 aa)). Position 11–16 (11–16 (ASGKTF)) interacts with ATP.

This sequence belongs to the CoaE family.

The protein localises to the cytoplasm. It carries out the reaction 3'-dephospho-CoA + ATP = ADP + CoA + H(+). Its pathway is cofactor biosynthesis; coenzyme A biosynthesis; CoA from (R)-pantothenate: step 5/5. Catalyzes the phosphorylation of the 3'-hydroxyl group of dephosphocoenzyme A to form coenzyme A. The polypeptide is Dephospho-CoA kinase (Rickettsia felis (strain ATCC VR-1525 / URRWXCal2) (Rickettsia azadi)).